A 199-amino-acid polypeptide reads, in one-letter code: MYEGVVQDLIDELGRLPGVGPKSAQRIAFHILQAEPTDVRRLAQCLMEVKAKVRFCATCGNVAQEELCNICRDPRRDLSVICVVEEPKDVVAIERTREFRGKYHVLGGAISPIEGVGPDDLRIRELLARLADGTVTELILATDPNLEGEATATYLARMIKPMGLKVTRLASGLPVGGDLEYADEVTLGRAFEGRRLLDV.

The C4-type zinc-finger motif lies at 56–71 (CATCGNVAQEELCNIC). Positions 79 to 174 (SVICVVEEPK…KVTRLASGLP (96 aa)) constitute a Toprim domain.

It belongs to the RecR family.

Functionally, may play a role in DNA repair. It seems to be involved in an RecBC-independent recombinational process of DNA repair. It may act with RecF and RecO. This Streptomyces avermitilis (strain ATCC 31267 / DSM 46492 / JCM 5070 / NBRC 14893 / NCIMB 12804 / NRRL 8165 / MA-4680) protein is Recombination protein RecR.